Consider the following 319-residue polypeptide: Lipoyl synthase (319 aa).

[4Fe-4S] cluster is bound by residues cysteine 61, cysteine 66, cysteine 72, cysteine 87, cysteine 91, cysteine 94, and serine 300. Residues 73–289 enclose the Radical SAM core domain; sequence WDKKHATFMI…ESVAYSKGFL (217 aa).

It belongs to the radical SAM superfamily. Lipoyl synthase family. The cofactor is [4Fe-4S] cluster.

It is found in the cytoplasm. The enzyme catalyses [[Fe-S] cluster scaffold protein carrying a second [4Fe-4S](2+) cluster] + N(6)-octanoyl-L-lysyl-[protein] + 2 oxidized [2Fe-2S]-[ferredoxin] + 2 S-adenosyl-L-methionine + 4 H(+) = [[Fe-S] cluster scaffold protein] + N(6)-[(R)-dihydrolipoyl]-L-lysyl-[protein] + 4 Fe(3+) + 2 hydrogen sulfide + 2 5'-deoxyadenosine + 2 L-methionine + 2 reduced [2Fe-2S]-[ferredoxin]. Its pathway is protein modification; protein lipoylation via endogenous pathway; protein N(6)-(lipoyl)lysine from octanoyl-[acyl-carrier-protein]: step 2/2. In terms of biological role, catalyzes the radical-mediated insertion of two sulfur atoms into the C-6 and C-8 positions of the octanoyl moiety bound to the lipoyl domains of lipoate-dependent enzymes, thereby converting the octanoylated domains into lipoylated derivatives. In Rhodopseudomonas palustris (strain BisB18), this protein is Lipoyl synthase.